Reading from the N-terminus, the 545-residue chain is MSILSLVEDRPTPKEVYNWRIYLLAAVASFTSCMIGYDSAFIGTTISLQSFKDEFNWDAMSTDKQNLISANIVSLYQAGAFFGAFFAYPMGHFWGRRWGLFVAALVFTLGAGLMLGANGDRGLGLIYGGRVLAGLGVGAGSNITPIYISELAPPAIRGRLVGVYELGWQIGGLVGFWICFGVDDTLAPSHKQWIIPFAVQLIPSGLLLLGILFVRESPRWLFLRGRREQAIQNLCWIRQLPVDHIYMIEEIGAIDQSLEQQRSTIGLGFTKPFLAVWSNKRIMYRLFLGSMLFLWQNGSGINAINYYSPTVFKSIGLRGANTSLLTTGIFGVVKTVVTFVWLLWLIDRLGRRLLLMIGAAGGSVCLWIVGAYIKVAKPTERDPDAPLDGGGIAAMFFFYLWTVFYTPSWNGTPWVMNSEMFDPNVRSLAQACAAGSNWLWNFLISRFTPQMFAKMEYGVYFFFASLMILSIVFVFFLIPETKGIPLESMDGLFEYKPIWRAHAKVLAQLREDEERFRTDIEESGYTKSDAQQVERVEQAESVPKA.

Over 1-22 (MSILSLVEDRPTPKEVYNWRIY) the chain is Cytoplasmic. A helical membrane pass occupies residues 23-43 (LLAAVASFTSCMIGYDSAFIG). The Extracellular segment spans residues 44 to 66 (TTISLQSFKDEFNWDAMSTDKQN). A helical transmembrane segment spans residues 67-87 (LISANIVSLYQAGAFFGAFFA). Residues 88–97 (YPMGHFWGRR) lie on the Cytoplasmic side of the membrane. The helical transmembrane segment at 98 to 118 (WGLFVAALVFTLGAGLMLGAN) threads the bilayer. The Extracellular portion of the chain corresponds to 119 to 130 (GDRGLGLIYGGR). The chain crosses the membrane as a helical span at residues 131-151 (VLAGLGVGAGSNITPIYISEL). Topologically, residues 152-159 (APPAIRGR) are cytoplasmic. A helical membrane pass occupies residues 160-180 (LVGVYELGWQIGGLVGFWICF). Residues 181 to 193 (GVDDTLAPSHKQW) are Extracellular-facing. The helical transmembrane segment at 194 to 214 (IIPFAVQLIPSGLLLLGILFV) threads the bilayer. The Cytoplasmic portion of the chain corresponds to 215-285 (RESPRWLFLR…VWSNKRIMYR (71 aa)). Residues 286-306 (LFLGSMLFLWQNGSGINAINY) form a helical membrane-spanning segment. The Extracellular portion of the chain corresponds to 307–325 (YSPTVFKSIGLRGANTSLL). Residues 326–346 (TTGIFGVVKTVVTFVWLLWLI) traverse the membrane as a helical segment. Residues 347–352 (DRLGRR) lie on the Cytoplasmic side of the membrane. Residues 353–373 (LLLMIGAAGGSVCLWIVGAYI) form a helical membrane-spanning segment. Topologically, residues 374-384 (KVAKPTERDPD) are extracellular. A helical transmembrane segment spans residues 385–405 (APLDGGGIAAMFFFYLWTVFY). Residues 406–457 (TPSWNGTPWVMNSEMFDPNVRSLAQACAAGSNWLWNFLISRFTPQMFAKMEY) lie on the Cytoplasmic side of the membrane. Residues 458-478 (GVYFFFASLMILSIVFVFFLI) form a helical membrane-spanning segment. Residues 479–545 (PETKGIPLES…VEQAESVPKA (67 aa)) lie on the Extracellular side of the membrane. The tract at residues 520–545 (IEESGYTKSDAQQVERVEQAESVPKA) is disordered.

This sequence belongs to the major facilitator superfamily. Sugar transporter (TC 2.A.1.1) family. As to quaternary structure, interacts with creB. Ubiquitinated. Deubiquitinated by creB, probably to control its activity or amount.

Its subcellular location is the cell membrane. Functionally, integral membrane transporter that imports quinic acid to be catabolized as a carbon source. The polypeptide is Probable quinate permease (qutD) (Aspergillus terreus (strain NIH 2624 / FGSC A1156)).